A 246-amino-acid polypeptide reads, in one-letter code: Electron transfer flavoprotein beta subunit lysine methyltransferase (246 aa).

It belongs to the methyltransferase superfamily. ETFBKMT family.

The protein localises to the cytoplasm. It is found in the mitochondrion matrix. The catalysed reaction is L-lysyl-[protein] + 3 S-adenosyl-L-methionine = N(6),N(6),N(6)-trimethyl-L-lysyl-[protein] + 3 S-adenosyl-L-homocysteine + 3 H(+). Its function is as follows. Protein-lysine methyltransferase that selectively trimethylates the flavoprotein ETFB in mitochondria. Thereby, may negatively regulate the function of ETFB in electron transfer from Acyl-CoA dehydrogenases to the main respiratory chain. In Xenopus laevis (African clawed frog), this protein is Electron transfer flavoprotein beta subunit lysine methyltransferase (etfbkmt).